We begin with the raw amino-acid sequence, 344 residues long: L-rhamnose-proton symporter (344 aa).

The next 10 helical transmembrane spans lie at 4 to 24, 38 to 58, 68 to 88, 101 to 121, 137 to 157, 175 to 195, 207 to 227, 259 to 279, 290 to 310, and 321 to 341; these read AIIL…CFYA, WSIG…YLLL, FSIA…IGNI, MGIG…TPIL, TLLG…AGLL, LILA…MDAA, INSL…GAII, ILFS…YAWG, MSWM…GLLL, and VAVL…VGLG.

Belongs to the L-rhamnose transporter (TC 2.A.7.6) family.

The protein resides in the cell inner membrane. It carries out the reaction L-rhamnopyranose(in) + H(+)(in) = L-rhamnopyranose(out) + H(+)(out). Its function is as follows. Uptake of L-rhamnose across the cytoplasmic membrane with the concomitant transport of protons into the cell (symport system). This chain is L-rhamnose-proton symporter, found in Yersinia pseudotuberculosis serotype O:1b (strain IP 31758).